Here is a 489-residue protein sequence, read N- to C-terminus: Glutamyl-tRNA(Gln) amidotransferase subunit A (489 aa).

Catalysis depends on charge relay system residues Lys78 and Ser153. Ser177 functions as the Acyl-ester intermediate in the catalytic mechanism.

The protein belongs to the amidase family. GatA subfamily. In terms of assembly, heterotrimer of A, B and C subunits.

It carries out the reaction L-glutamyl-tRNA(Gln) + L-glutamine + ATP + H2O = L-glutaminyl-tRNA(Gln) + L-glutamate + ADP + phosphate + H(+). Allows the formation of correctly charged Gln-tRNA(Gln) through the transamidation of misacylated Glu-tRNA(Gln) in organisms which lack glutaminyl-tRNA synthetase. The reaction takes place in the presence of glutamine and ATP through an activated gamma-phospho-Glu-tRNA(Gln). The protein is Glutamyl-tRNA(Gln) amidotransferase subunit A of Enterococcus faecalis (strain ATCC 700802 / V583).